Consider the following 553-residue polypeptide: Formate--tetrahydrofolate ligase (553 aa).

62–69 (TPAGEGKS) is a binding site for ATP.

It belongs to the formate--tetrahydrofolate ligase family.

It carries out the reaction (6S)-5,6,7,8-tetrahydrofolate + formate + ATP = (6R)-10-formyltetrahydrofolate + ADP + phosphate. The protein operates within one-carbon metabolism; tetrahydrofolate interconversion. In Limosilactobacillus reuteri subsp. reuteri (strain JCM 1112) (Lactobacillus reuteri), this protein is Formate--tetrahydrofolate ligase.